The following is a 299-amino-acid chain: Ent-kaurene oxidase-like protein 1 (299 aa).

The chain crosses the membrane as a helical span at residues 16–36; that stretch reads AVVGVFVAAAVVGGFVAAVAL.

This sequence belongs to the cytochrome P450 family. Expressed in roots and panicles.

The protein resides in the membrane. This Oryza sativa subsp. japonica (Rice) protein is Ent-kaurene oxidase-like protein 1.